The primary structure comprises 236 residues: MSRSRITLLRTHCHECAYVSGRTARLEFLSPTLRLNDHRYQLLLEQGFRRSGPYVYRPHCPGCKACQSLRIPVARFRPRRRHRRCQRANANLHVTACPPVMTQEHLALYRRYIDHRHPRSSMANPDHAEAEGFLAAPWCTTVFYELRTEAQGSLLAVAVTDVLPDALSAVYTFYAPEAEHRGLGNLAVLWQLSEARRLGAQHLYLGYWIADAPAMAYKASFRPHEIFDGRGWRAQE.

It belongs to the R-transferase family. Bpt subfamily.

It localises to the cytoplasm. It catalyses the reaction N-terminal L-glutamyl-[protein] + L-leucyl-tRNA(Leu) = N-terminal L-leucyl-L-glutamyl-[protein] + tRNA(Leu) + H(+). It carries out the reaction N-terminal L-aspartyl-[protein] + L-leucyl-tRNA(Leu) = N-terminal L-leucyl-L-aspartyl-[protein] + tRNA(Leu) + H(+). Functionally, functions in the N-end rule pathway of protein degradation where it conjugates Leu from its aminoacyl-tRNA to the N-termini of proteins containing an N-terminal aspartate or glutamate. This Halorhodospira halophila (strain DSM 244 / SL1) (Ectothiorhodospira halophila (strain DSM 244 / SL1)) protein is Aspartate/glutamate leucyltransferase.